Reading from the N-terminus, the 430-residue chain is T-kininogen 1 (430 aa).

The signal sequence occupies residues 1 to 18; that stretch reads MKLITILLLCSRLLPSLA. Pyrrolidone carboxylic acid is present on Q19. The Cystatin kininogen-type 1 domain maps to 28 to 131; sequence CNDETVFQAV…TQICNITPGK (104 aa). 9 disulfides stabilise this stretch: C28–C404, C83–C94, C107–C125, C141–C144, C205–C217, C228–C247, C263–C266, C327–C339, and C350–C369. A glycan (N-linked (GlcNAc...) asparagine) is linked at N82. In terms of domain architecture, Cystatin kininogen-type 2 spans 150–253; that stretch reads MDSSDLKPVL…SQSCDLYPGD (104 aa). N168 and N204 each carry an N-linked (GlcNAc...) asparagine glycan. One can recognise a Cystatin kininogen-type 3 domain in the interval 272–375; sequence VDSPELKEAL…TVRCQALDMM (104 aa). N-linked (GlcNAc...) asparagine glycosylation is present at N326. The segment at 411–430 is disordered; the sequence is SKARAGPAPDHQAEASTVTP.

Post-translationally, as T-kinin is preceded by a Met instead of an Arg or Lys, it is not released from its precursor by either tissue or plasma kallikrein. As to expression, plasma.

Its subcellular location is the secreted. It is found in the extracellular space. Functionally, kininogens are plasma glycoproteins with a number of functions: (1) as precursor of the active peptide bradykinin they effect smooth muscle contraction, induction of hypotension and increase of vascular permeability. (2) They play a role in blood coagulation by helping to position optimally prekallikrein and factor XI next to factor XII. (3) They are inhibitor of thiol proteases. This is T-kininogen 1 (Map1) from Rattus norvegicus (Rat).